The primary structure comprises 262 residues: Putative hydroxypyruvate isomerase (262 aa).

Residues E146 and E244 each act as proton donor/acceptor in the active site.

The protein belongs to the hyi family.

The enzyme catalyses 3-hydroxypyruvate = 2-hydroxy-3-oxopropanoate. In terms of biological role, catalyzes the reversible isomerization between hydroxypyruvate and 2-hydroxy-3-oxopropanoate (also termed tartronate semialdehyde). This is Putative hydroxypyruvate isomerase from Caenorhabditis elegans.